We begin with the raw amino-acid sequence, 109 residues long: Large ribosomal subunit protein uL24 (109 aa).

The protein belongs to the universal ribosomal protein uL24 family. As to quaternary structure, part of the 50S ribosomal subunit.

One of two assembly initiator proteins, it binds directly to the 5'-end of the 23S rRNA, where it nucleates assembly of the 50S subunit. Functionally, one of the proteins that surrounds the polypeptide exit tunnel on the outside of the subunit. This Legionella pneumophila subsp. pneumophila (strain Philadelphia 1 / ATCC 33152 / DSM 7513) protein is Large ribosomal subunit protein uL24.